Reading from the N-terminus, the 158-residue chain is RING-H2 finger protein ATL66 (158 aa).

A helical transmembrane segment spans residues 33–53 (LFFALALFSVVLFFALLTLYI). The RING-type; atypical zinc finger occupies 107–149 (CCICLGGFEEGEKMKVLPPCSHCYHCECVDRWLKTESSCPLCR).

It belongs to the RING-type zinc finger family. ATL subfamily.

The protein resides in the membrane. It carries out the reaction S-ubiquitinyl-[E2 ubiquitin-conjugating enzyme]-L-cysteine + [acceptor protein]-L-lysine = [E2 ubiquitin-conjugating enzyme]-L-cysteine + N(6)-ubiquitinyl-[acceptor protein]-L-lysine.. It participates in protein modification; protein ubiquitination. The polypeptide is RING-H2 finger protein ATL66 (ATL66) (Arabidopsis thaliana (Mouse-ear cress)).